A 94-amino-acid chain; its full sequence is UPF0358 protein Bcer98_2651 (94 aa).

Belongs to the UPF0358 family.

The protein is UPF0358 protein Bcer98_2651 of Bacillus cytotoxicus (strain DSM 22905 / CIP 110041 / 391-98 / NVH 391-98).